The sequence spans 353 residues: Keratocan (353 aa).

An N-terminal signal peptide occupies residues 1–21 (MMTLKVCPSLLLLFLVHSVWT). The LRRNT domain occupies 34–72 (EHWSHYTFECPQECFCPPSFPNALYCDNKGLKEIPAIPA). 2 disulfide bridges follow: cysteine 43–cysteine 49 and cysteine 47–cysteine 59. LRR repeat units follow at residues 73–94 (RIWY…PFVN), 97–118 (HLRW…SGVL), 123–143 (RLLY…PLPV), 144–165 (GLEQ…VFSN), 168–188 (NLTM…QSDT), 194–214 (SLMQ…SIPA), 215–236 (NTLQ…YFSA), and 239–259 (KVTF…PPNG). An N-linked (GlcNAc...) (keratan sulfate) asparagine glycan is attached at asparagine 94. Asparagine 168 carries an N-linked (GlcNAc...) asparagine glycan. An N-linked (GlcNAc...) (keratan sulfate) asparagine glycan is attached at asparagine 223. A glycan (N-linked (GlcNAc...) (keratan sulfate) asparagine) is linked at asparagine 261. LRR repeat units follow at residues 264-283 (SILD…PINA) and 284-305 (HLEH…QICP). Asparagine 299 carries N-linked (GlcNAc...) asparagine glycosylation. Cysteine 304 and cysteine 344 form a disulfide bridge.

Belongs to the small leucine-rich proteoglycan (SLRP) family. SLRP class II subfamily. As to expression, cornea.

The protein localises to the secreted. Its subcellular location is the extracellular space. The protein resides in the extracellular matrix. In terms of biological role, plays an important role in generating and maintaining a transparent matrix within the corneal stroma. The protein is Keratocan (KERA) of Coturnix japonica (Japanese quail).